The chain runs to 619 residues: TOX high mobility group box family member 4 (619 aa).

Disordered stretches follow at residues 153–227 (LGLS…QKPV) and 304–337 (DMDPAPPSQTPSPPPVAAADPASPAPASTEPPAL). Thr-176 bears the Phosphothreonine mark. Residues Ser-178, Ser-181, and Ser-182 each carry the phosphoserine modification. Residues 183–193 (LHEDGVEEFRR) are compositionally biased toward basic and acidic residues. The span at 208–218 (KQKAPKKRKKK) shows a compositional bias: basic residues. Residues 213–218 (KKRKKK) carry the Nuclear localization signal motif. Residues 223–291 (PQKPVSAYAL…EYLKALAAYK (69 aa)) constitute a DNA-binding region (HMG box). Over residues 307-319 (PAPPSQTPSPPPV) the composition is skewed to pro residues. Position 313 is a phosphothreonine (Thr-313). Ser-315 carries the post-translational modification Phosphoserine. The span at 320 to 337 (AAADPASPAPASTEPPAL) shows a compositional bias: low complexity. At Arg-479 the chain carries Asymmetric dimethylarginine. Positions 507-529 (PPPVESSPEQPVNNSPETHTVEE) are disordered. A compositionally biased stretch (low complexity) spans 512–524 (SSPEQPVNNSPET). Ser-548, Ser-550, Ser-558, Ser-560, and Ser-565 each carry phosphoserine.

In terms of assembly, component of the PNUTS-PP1 phosphatase complex, composed of PPP1R10/PNUTS, TOX4, WDR82 and PPP1CA or PPP1CB or PPP1CC. Interacts with PPP1R10/PNUTS. Interacts with FOXO1 and CREB1 (increased by cAMP); FOXO1 and CREB1 are required for full induction of TOX4-dependent activity and the interactions are inhibited by insulin.

It localises to the nucleus. The protein localises to the chromosome. In liver, recruited to target gene promoters following treatment with dexamethasone and cAMP. Binding is decreased in presence of insulin. Functionally, transcription factor that modulates cell fate reprogramming from the somatic state to the pluripotent and neuronal fate. In liver, controls the expression of hormone-regulated gluconeogenic genes such as G6PC1 and PCK1. This regulation is independent of the insulin receptor activation. Also acts as a regulatory component of protein phosphatase 1 (PP1) complexes. Component of the PNUTS-PP1 protein phosphatase complex, a PP1 complex that regulates RNA polymerase II transcription pause-release. PNUTS-PP1 also plays a role in the control of chromatin structure and cell cycle progression during the transition from mitosis into interphase. In Bos taurus (Bovine), this protein is TOX high mobility group box family member 4 (TOX4).